We begin with the raw amino-acid sequence, 184 residues long: Translation initiation factor IF-3 (184 aa).

The protein belongs to the IF-3 family. Monomer.

It is found in the cytoplasm. In terms of biological role, IF-3 binds to the 30S ribosomal subunit and shifts the equilibrium between 70S ribosomes and their 50S and 30S subunits in favor of the free subunits, thus enhancing the availability of 30S subunits on which protein synthesis initiation begins. This chain is Translation initiation factor IF-3, found in Hamiltonella defensa subsp. Acyrthosiphon pisum (strain 5AT).